Consider the following 440-residue polypeptide: Putative postmeiotic segregation increased 2-like protein 1 (440 aa).

The segment covering 164-178 (RVEHNVESSRWEPRR) has biased composition (basic and acidic residues). The segment at 164 to 215 (RVEHNVESSRWEPRRRGACGSRGGNFPSPRGGSGVASLERAESSSTEPAKAI) is disordered. The Histidine kinase domain maps to 230–364 (PVVPSLSTAV…MTVSVKQLFS (135 aa)).

Belongs to the DNA mismatch repair MutL/HexB family. As to expression, highly expressed in kidney, spleen, adrenal gland, ovary and cerebellum and to a lower extent in liver, esophagus, stomach, duodenum, colon, bladder, uterus, lung, pancreas and cerebrum. Not expressed in heart.

The sequence is that of Putative postmeiotic segregation increased 2-like protein 1 (PMS2P1) from Homo sapiens (Human).